Reading from the N-terminus, the 199-residue chain is MRCDATQEKRAHSESGESVFFQKFLETRQILLSGEISKDLAEGIVRQLFVLESLSVSKPIYMYVDSPGGDVDAGYAIFDVIRFVKTPVYTIGMGLVASAGVLVLLAAKKDCRFGLRNSRYLIHQPLSGMRGVATDIEIHARELEKTRSKLNALIASETGVSLDKVAQDTNRDYWLDASQALEYGLISNLIEKRADLPKK.

Catalysis depends on serine 98, which acts as the Nucleophile. Histidine 123 is an active-site residue.

This sequence belongs to the peptidase S14 family. As to quaternary structure, fourteen ClpP subunits assemble into 2 heptameric rings which stack back to back to give a disk-like structure with a central cavity, resembling the structure of eukaryotic proteasomes.

Its subcellular location is the cytoplasm. It catalyses the reaction Hydrolysis of proteins to small peptides in the presence of ATP and magnesium. alpha-casein is the usual test substrate. In the absence of ATP, only oligopeptides shorter than five residues are hydrolyzed (such as succinyl-Leu-Tyr-|-NHMec, and Leu-Tyr-Leu-|-Tyr-Trp, in which cleavage of the -Tyr-|-Leu- and -Tyr-|-Trp bonds also occurs).. Functionally, cleaves peptides in various proteins in a process that requires ATP hydrolysis. Has a chymotrypsin-like activity. Plays a major role in the degradation of misfolded proteins. The sequence is that of ATP-dependent Clp protease proteolytic subunit 2 from Treponema pallidum (strain Nichols).